A 447-amino-acid chain; its full sequence is GTPase Der (447 aa).

EngA-type G domains lie at 3–167 (PVIA…ALPE) and 180–353 (IRLA…KSAN). Residues 9-16 (GRPNVGKS), 56-60 (DTGGF), 119-122 (NKAE), 186-193 (GRPNVGKS), 233-237 (DTAGL), and 298-301 (NKWD) contribute to the GTP site. One can recognise a KH-like domain in the interval 354 to 438 (RKMPTPVLTR…PLRIEMKTSS (85 aa)).

It belongs to the TRAFAC class TrmE-Era-EngA-EngB-Septin-like GTPase superfamily. EngA (Der) GTPase family. Associates with the 50S ribosomal subunit.

Functionally, GTPase that plays an essential role in the late steps of ribosome biogenesis. The protein is GTPase Der of Acidovorax sp. (strain JS42).